The chain runs to 485 residues: UDP-N-acetylmuramate--L-alanine ligase (485 aa).

129 to 135 (GTHGKTT) is an ATP binding site.

It belongs to the MurCDEF family.

The protein resides in the cytoplasm. It catalyses the reaction UDP-N-acetyl-alpha-D-muramate + L-alanine + ATP = UDP-N-acetyl-alpha-D-muramoyl-L-alanine + ADP + phosphate + H(+). It participates in cell wall biogenesis; peptidoglycan biosynthesis. In terms of biological role, cell wall formation. The protein is UDP-N-acetylmuramate--L-alanine ligase of Vibrio parahaemolyticus serotype O3:K6 (strain RIMD 2210633).